The primary structure comprises 81 residues: Cytochrome c oxidase subunit NDUFA4 (81 aa).

Topologically, residues M1–S14 are mitochondrial matrix. K10 is modified (N6-acetyllysine). Residues L15–A37 traverse the membrane as a helical segment. Residues L38–F81 are Mitochondrial intermembrane-facing. A Phosphoserine modification is found at S66.

Belongs to the complex IV NDUFA4 subunit family. In terms of assembly, component of the cytochrome c oxidase (complex IV, CIV), a multisubunit enzyme composed of 14 subunits. The complex is composed of a catalytic core of 3 subunits MT-CO1, MT-CO2 and MT-CO3, encoded in the mitochondrial DNA, and 11 supernumerary subunits COX4I1 (or COX4I2), COX5A, COX5B, COX6A1 (or COX6A2), COX6B1 (or COX6B2), COX6C, COX7A2 (or COX7A1), COX7B, COX7C, COX8A and NDUFA4, which are encoded in the nuclear genome. The complex exists as a monomer or a dimer and forms supercomplexes (SCs) in the inner mitochondrial membrane with NADH-ubiquinone oxidoreductase (complex I, CI) and ubiquinol-cytochrome c oxidoreductase (cytochrome b-c1 complex, complex III, CIII), resulting in different assemblies (supercomplex SCI(1)III(2)IV(1) and megacomplex MCI(2)III(2)IV(2)). Interacts with RAB5IF. Interacts with FLVCR2; this interaction occurs in the absence of heme and is disrupted upon heme binding.

It localises to the mitochondrion inner membrane. Its function is as follows. Component of the cytochrome c oxidase, the last enzyme in the mitochondrial electron transport chain which drives oxidative phosphorylation. The respiratory chain contains 3 multisubunit complexes succinate dehydrogenase (complex II, CII), ubiquinol-cytochrome c oxidoreductase (cytochrome b-c1 complex, complex III, CIII) and cytochrome c oxidase (complex IV, CIV), that cooperate to transfer electrons derived from NADH and succinate to molecular oxygen, creating an electrochemical gradient over the inner membrane that drives transmembrane transport and the ATP synthase. Cytochrome c oxidase is the component of the respiratory chain that catalyzes the reduction of oxygen to water. Electrons originating from reduced cytochrome c in the intermembrane space (IMS) are transferred via the dinuclear copper A center (CU(A)) of subunit 2 and heme A of subunit 1 to the active site in subunit 1, a binuclear center (BNC) formed by heme A3 and copper B (CU(B)). The BNC reduces molecular oxygen to 2 water molecules unsing 4 electrons from cytochrome c in the IMS and 4 protons from the mitochondrial matrix. NDUFA4 is required for complex IV maintenance. This chain is Cytochrome c oxidase subunit NDUFA4 (NDUFA4), found in Homo sapiens (Human).